The primary structure comprises 596 residues: Chaperonin 60 subunit beta 2, chloroplastic (596 aa).

A chloroplast-targeting transit peptide spans 1-50 (MASTFTATSSLGSLLAPNAIKLSSATSISSSSFGRRHNVCVRRSRPAIVC). 2 positions are modified to phosphoserine: Ser-97 and Ser-474. Positions 388-489 (TQEAVNKRVV…KDTLENDEEK (102 aa)) form a coiled coil.

It belongs to the chaperonin (HSP60) family. In terms of assembly, part of the Cpn60 complex composed of 7 alpha and 7 beta subunits. Can also form a complex composed of 14 beta subunits only. Both complexes show ATPase activity. The Cpn60 complex interacts with the Cpn10 complex. Interacts with RAB during heat stress.

The protein resides in the plastid. Its subcellular location is the chloroplast stroma. In terms of biological role, involved in protein assisted folding. This is Chaperonin 60 subunit beta 2, chloroplastic (CPN60B2) from Arabidopsis thaliana (Mouse-ear cress).